A 182-amino-acid polypeptide reads, in one-letter code: MESVRRGKLMKNKKIKFDVYLNGIAYHCIKCGFCCDAPTVTKKDLAKIAGYLKIPFDEVLKRYVRFFNGYIGELKEVGGKCIFLDKKTKKCKIYKVRPLICRLRPYSVQVRNGKLTLTYDIWFLRYCRGLYLGDGKVEDEYFKYAELVLKYLGFEEGVDEEEFKRAKERLLEESLKYRKKKD.

This sequence to H.pylori HP0274.

This is an uncharacterized protein from Methanocaldococcus jannaschii (strain ATCC 43067 / DSM 2661 / JAL-1 / JCM 10045 / NBRC 100440) (Methanococcus jannaschii).